The chain runs to 299 residues: Taste receptor type 2 member 4 (299 aa).

Over 1 to 9 (MLQLFYFSA) the chain is Extracellular. Residues 10-30 (IIASVILNFVGIIMNLFIMVV) traverse the membrane as a helical segment. Topologically, residues 31–46 (NCKTWVKSHRISSSDR) are cytoplasmic. Residues 47-67 (ILFSLGITRFLMLGLFLVNTI) form a helical membrane-spanning segment. Residues 68-81 (FFVSSNTERSVYLS) lie on the Extracellular side of the membrane. Residues 82-102 (AFFVLCFMFXDSSSLWFVTLL) traverse the membrane as a helical segment. The Cytoplasmic segment spans residues 103–131 (NILYCVKITNFQHSVFLLLKQNISPKIPR). Residues 132-152 (LLLACVLISAFTTCLYITLSQ) traverse the membrane as a helical segment. The Extracellular segment spans residues 153 to 172 (ASPFPELVTKRNNTSFNTHE). N-linked (GlcNAc...) asparagine glycans are attached at residues N164 and N165. Residues 173-193 (GILSLVVSLVLSSSLQFIINV) traverse the membrane as a helical segment. At 194–230 (TSASLLIHSLRRHIQKMQKNATGFWNPQTEAHVGAMK) the chain is on the cytoplasmic side. The chain crosses the membrane as a helical span at residues 231 to 251 (LMIYFLILYIPYSVATLVQYL). The Extracellular portion of the chain corresponds to 252–262 (PFYVGMDMGTK). A helical membrane pass occupies residues 263–283 (AICLIFATLYSPGHSVLIIIT). Residues 284 to 299 (HPKLKTTAKKILCFKK) are Cytoplasmic-facing.

Belongs to the G-protein coupled receptor T2R family.

Its subcellular location is the membrane. The protein localises to the cell projection. The protein resides in the cilium membrane. Functionally, gustducin-coupled receptor implicated in the perception of bitter compounds in the oral cavity and the gastrointestinal tract. Signals through PLCB2 and the calcium-regulated cation channel TRPM5. In airway epithelial cells, binding of denatonium increases the intracellular calcium ion concentration and stimulates ciliary beat frequency. In Pongo pygmaeus (Bornean orangutan), this protein is Taste receptor type 2 member 4 (TAS2R4).